The sequence spans 475 residues: 3-isopropylmalate dehydratase large subunit (475 aa).

Residues C353, C414, and C417 each coordinate [4Fe-4S] cluster.

The protein belongs to the aconitase/IPM isomerase family. LeuC type 1 subfamily. As to quaternary structure, heterodimer of LeuC and LeuD. [4Fe-4S] cluster serves as cofactor.

It carries out the reaction (2R,3S)-3-isopropylmalate = (2S)-2-isopropylmalate. It participates in amino-acid biosynthesis; L-leucine biosynthesis; L-leucine from 3-methyl-2-oxobutanoate: step 2/4. In terms of biological role, catalyzes the isomerization between 2-isopropylmalate and 3-isopropylmalate, via the formation of 2-isopropylmaleate. This chain is 3-isopropylmalate dehydratase large subunit, found in Ectopseudomonas mendocina (strain ymp) (Pseudomonas mendocina).